Consider the following 419-residue polypeptide: Acyl-coenzyme A thioesterase 1 (419 aa).

Active-site charge relay system residues include Ser232, Asp324, and His358. At Ser416 the chain carries Phosphoserine.

This sequence belongs to the C/M/P thioester hydrolase family. In terms of assembly, monomer. Expressed in liver.

It localises to the cytoplasm. Its subcellular location is the cytosol. It catalyses the reaction hexadecanoyl-CoA + H2O = hexadecanoate + CoA + H(+). It carries out the reaction dodecanoyl-CoA + H2O = dodecanoate + CoA + H(+). The catalysed reaction is tetradecanoyl-CoA + H2O = tetradecanoate + CoA + H(+). The enzyme catalyses decanoyl-CoA + H2O = decanoate + CoA + H(+). It catalyses the reaction octadecanoyl-CoA + H2O = octadecanoate + CoA + H(+). It carries out the reaction eicosanoyl-CoA + H2O = eicosanoate + CoA + H(+). The catalysed reaction is (9Z)-octadecenoyl-CoA + H2O = (9Z)-octadecenoate + CoA + H(+). The enzyme catalyses (9Z)-hexadecenoyl-CoA + H2O = (9Z)-hexadecenoate + CoA + H(+). It catalyses the reaction (9E)-octadecenoyl-CoA + H2O = (9E)-octadecenoate + CoA + H(+). It participates in lipid metabolism; fatty acid metabolism. Functionally, catalyzes the hydrolysis of acyl-CoAs into free fatty acids and coenzyme A (CoASH), regulating their respective intracellular levels. More active towards saturated and unsaturated long chain fatty acyl-CoAs (C12-C20). This Rattus norvegicus (Rat) protein is Acyl-coenzyme A thioesterase 1 (Acot1).